Reading from the N-terminus, the 501-residue chain is 2,3-bisphosphoglycerate-independent phosphoglycerate mutase (501 aa).

Mn(2+) contacts are provided by D10 and S60. S60 functions as the Phosphoserine intermediate in the catalytic mechanism. Substrate-binding positions include H121, R151 to D152, R182, R188, R256 to R259, and K329. Mn(2+) contacts are provided by D394, H398, D435, H436, and H453.

It belongs to the BPG-independent phosphoglycerate mutase family. In terms of assembly, monomer. The cofactor is Mn(2+).

It carries out the reaction (2R)-2-phosphoglycerate = (2R)-3-phosphoglycerate. The protein operates within carbohydrate degradation; glycolysis; pyruvate from D-glyceraldehyde 3-phosphate: step 3/5. In terms of biological role, catalyzes the interconversion of 2-phosphoglycerate and 3-phosphoglycerate. The polypeptide is 2,3-bisphosphoglycerate-independent phosphoglycerate mutase (Mycoplasmopsis synoviae (strain 53) (Mycoplasma synoviae)).